A 691-amino-acid polypeptide reads, in one-letter code: Competence protein ComA (691 aa).

The next 6 helical transmembrane spans lie at 183-203 (HLVSISGLHVTMVAVLFAWLA), 220-240 (WVLAAGCAGALFYALLAGFSV), 280-300 (LAVLGVGTWLSFGLVAALIWA), 322-342 (VLSLVLLGYLFASLPLVSPLV), 347-367 (IPWFSWVLTPLALLGSVVPFA), and 396-416 (VAAAPLPLLVLAVCAALLLLL).

The protein to B.subtilis ComEC, H.influenzae REC2, and E.coli YcaI.

The protein localises to the cell inner membrane. Essential for natural transformation. Could be a transporter involved in DNA uptake. The sequence is that of Competence protein ComA (comA) from Neisseria gonorrhoeae.